The following is a 208-amino-acid chain: CD209 antigen-like protein E (208 aa).

At 1–16 (MRAPQMGSLGFLDKGH) the chain is on the cytoplasmic side. Residues 17–37 (IPLVLQLLFLILFTGLLVAII) form a helical; Signal-anchor for type II membrane protein membrane-spanning segment. The Extracellular portion of the chain corresponds to 38–208 (IQVSKMPSSE…KIATTCLSKW (171 aa)). 3 disulfides stabilise this stretch: cysteine 77–cysteine 88, cysteine 105–cysteine 197, and cysteine 176–cysteine 189. The C-type lectin domain maps to 83–198 (FFNGNCYFFS…CEQRKFWICK (116 aa)).

Its subcellular location is the membrane. Functionally, putative pathogen-recognition receptor. May mediate the endocytosis of pathogens which are subsequently degraded in lysosomal compartments. The protein is CD209 antigen-like protein E (Cd209e) of Mus musculus (Mouse).